The primary structure comprises 1569 residues: Pentafunctional AROM polypeptide (1569 aa).

Residues 1 to 382 (MAEAKKPGPE…HEPRASVVDD (382 aa)) form a 3-dehydroquinate synthase region. Residues 49–51 (DTN), 84–87 (EASK), 115–117 (GGV), and Asp120 contribute to the NAD(+) site. A 7-phospho-2-dehydro-3-deoxy-D-arabino-heptonate-binding site is contributed by Arg131. Position 140 to 141 (140 to 141 (TT)) interacts with NAD(+). Residues Asp147 and Lys153 each coordinate 7-phospho-2-dehydro-3-deoxy-D-arabino-heptonate. An NAD(+)-binding site is contributed by Lys162. Position 163 (Asn163) interacts with 7-phospho-2-dehydro-3-deoxy-D-arabino-heptonate. NAD(+) is bound by residues 180–183 (FLET) and Asn191. A Zn(2+)-binding site is contributed by Glu195. Residues 195–198 (EVVK) and Lys248 contribute to the 7-phospho-2-dehydro-3-deoxy-D-arabino-heptonate site. The active-site Proton acceptor; for 3-dehydroquinate synthase activity is Glu258. Residues 262–266 (RNLLN) and His269 each bind 7-phospho-2-dehydro-3-deoxy-D-arabino-heptonate. His269 is a Zn(2+) binding site. His273 acts as the Proton acceptor; for 3-dehydroquinate synthase activity in catalysis. 7-phospho-2-dehydro-3-deoxy-D-arabino-heptonate-binding residues include His285 and Lys354. His285 serves as a coordination point for Zn(2+). The EPSP synthase stretch occupies residues 395 to 837 (VTPGVPSNLD…WDILSQAFKV (443 aa)). Catalysis depends on Cys819, which acts as the For EPSP synthase activity. The segment at 859 to 1053 (ERSVFIIGMR…MEKDHSFFVS (195 aa)) is shikimate kinase. An ATP-binding site is contributed by 866-873 (GMRGAGKT). Residues 1054-1267 (LTVPDVSEAA…AAPGQMSAAE (214 aa)) are 3-dehydroquinase. The active-site Proton acceptor; for 3-dehydroquinate dehydratase activity is the His1170. Catalysis depends on Lys1198, which acts as the Schiff-base intermediate with substrate; for 3-dehydroquinate dehydratase activity. The interval 1280–1569 (PCNFYLFGKP…RDARSAVLGL (290 aa)) is shikimate dehydrogenase.

In the N-terminal section; belongs to the sugar phosphate cyclases superfamily. Dehydroquinate synthase family. It in the 2nd section; belongs to the EPSP synthase family. This sequence in the 3rd section; belongs to the shikimate kinase family. The protein in the 4th section; belongs to the type-I 3-dehydroquinase family. In the C-terminal section; belongs to the shikimate dehydrogenase family. Homodimer. Zn(2+) serves as cofactor.

Its subcellular location is the cytoplasm. It carries out the reaction 7-phospho-2-dehydro-3-deoxy-D-arabino-heptonate = 3-dehydroquinate + phosphate. The enzyme catalyses 3-dehydroquinate = 3-dehydroshikimate + H2O. The catalysed reaction is shikimate + NADP(+) = 3-dehydroshikimate + NADPH + H(+). It catalyses the reaction shikimate + ATP = 3-phosphoshikimate + ADP + H(+). It carries out the reaction 3-phosphoshikimate + phosphoenolpyruvate = 5-O-(1-carboxyvinyl)-3-phosphoshikimate + phosphate. It participates in metabolic intermediate biosynthesis; chorismate biosynthesis; chorismate from D-erythrose 4-phosphate and phosphoenolpyruvate: step 2/7. Its pathway is metabolic intermediate biosynthesis; chorismate biosynthesis; chorismate from D-erythrose 4-phosphate and phosphoenolpyruvate: step 3/7. The protein operates within metabolic intermediate biosynthesis; chorismate biosynthesis; chorismate from D-erythrose 4-phosphate and phosphoenolpyruvate: step 4/7. It functions in the pathway metabolic intermediate biosynthesis; chorismate biosynthesis; chorismate from D-erythrose 4-phosphate and phosphoenolpyruvate: step 5/7. It participates in metabolic intermediate biosynthesis; chorismate biosynthesis; chorismate from D-erythrose 4-phosphate and phosphoenolpyruvate: step 6/7. The AROM polypeptide catalyzes 5 consecutive enzymatic reactions in prechorismate polyaromatic amino acid biosynthesis. This Fusarium vanettenii (strain ATCC MYA-4622 / CBS 123669 / FGSC 9596 / NRRL 45880 / 77-13-4) (Fusarium solani subsp. pisi) protein is Pentafunctional AROM polypeptide.